Reading from the N-terminus, the 276-residue chain is Protein MGF 360-15R (276 aa).

Belongs to the asfivirus MGF 360 family.

Its function is as follows. Plays a role in virus cell tropism, and may be required for efficient virus replication in macrophages. In African swine fever virus (isolate Warthog/Namibia/Wart80/1980) (ASFV), this protein is Protein MGF 360-15R.